The sequence spans 283 residues: Thymidylate synthase (283 aa).

Residue R22 coordinates dUMP. The active-site Nucleophile is C160. Residues 180-183, N191, and 221-223 contribute to the dUMP site; these read RSCD and HIY. D183 is a (6R)-5,10-methylene-5,6,7,8-tetrahydrofolate binding site. A (6R)-5,10-methylene-5,6,7,8-tetrahydrofolate-binding site is contributed by A282.

It belongs to the thymidylate synthase family. Bacterial-type ThyA subfamily. In terms of assembly, homodimer.

Its subcellular location is the cytoplasm. It carries out the reaction dUMP + (6R)-5,10-methylene-5,6,7,8-tetrahydrofolate = 7,8-dihydrofolate + dTMP. Its pathway is pyrimidine metabolism; dTTP biosynthesis. Catalyzes the reductive methylation of 2'-deoxyuridine-5'-monophosphate (dUMP) to 2'-deoxythymidine-5'-monophosphate (dTMP) while utilizing 5,10-methylenetetrahydrofolate (mTHF) as the methyl donor and reductant in the reaction, yielding dihydrofolate (DHF) as a by-product. This enzymatic reaction provides an intracellular de novo source of dTMP, an essential precursor for DNA biosynthesis. The protein is Thymidylate synthase of Idiomarina loihiensis (strain ATCC BAA-735 / DSM 15497 / L2-TR).